A 410-amino-acid chain; its full sequence is Mating-type locus allele B7 protein (410 aa).

The interval 1 to 110 (MSSDPNFSLT…VNVGSPAVGC (110 aa)) is variable domain between B alleles. The homeobox; TALE-type DNA-binding region spans 107–184 (AVGCRNLSED…NARRRSGWSH (78 aa)). The segment at 111 to 410 (RNLSEDLPAY…PFLCLSVAFV (300 aa)) is highly conserved between B alleles. Disordered stretches follow at residues 202 to 225 (RAKLSSSTQSSPPSPMPEYPSNNL), 278 to 336 (TPKP…PELS), and 374 to 394 (ARGNRKVKALPKRAGKQQPDE). The Nuclear localization signal signature appears at 276–308 (KKTPKPGMPRPVTTVAKRQPARKTKPAAKPNSR). Positions 306–336 (NSRTANPRASTTPSIDSTLDSSKLESTPELS) are enriched in polar residues. Residues 333–410 (PELSMCSTAD…PFLCLSVAFV (78 aa)) are not essential for B7 function. The segment covering 375-388 (RGNRKVKALPKRAG) has biased composition (basic residues).

This sequence belongs to the TALE/M-ATYP homeobox family.

It localises to the nucleus. The B locus has at least 25 alleles, and any combination of two different B alleles yields a multimeric regulatory protein, that activates genes responsible for the pathogenicity and for the sexual development of the fungus within the corn plant. The protein is Mating-type locus allele B7 protein of Mycosarcoma maydis (Corn smut fungus).